The primary structure comprises 305 residues: MKSHSAKSLSVEEATFSHLPVLPQEVVTGLAVRSGGHYLDATVGGGGHSRLILEAAPDVRLTAVDQDGDALTAAKKELAEFGEQVKFVRSNFAAYEFPVASFDGVLADLGVSSYHLDTPERGFSFRHQANLDMRMDQRQSLSAADVINDWDEVELANIFFKYGEERLSRRIARRIVEKRPFHTTTELAEAIASSVPPKYRYARIHPATRVFQALRIVVNDELKSLETFLEKAPKALVPGGRIAIISFHSLEDRLVKHGLRNSPSLKVLTKKPIIATEAEIANNPRSRSAKLRIAEKKAEMGQEDN.

Residues 46-48 (GGH), D65, F92, D108, and H115 contribute to the S-adenosyl-L-methionine site.

This sequence belongs to the methyltransferase superfamily. RsmH family.

It localises to the cytoplasm. It catalyses the reaction cytidine(1402) in 16S rRNA + S-adenosyl-L-methionine = N(4)-methylcytidine(1402) in 16S rRNA + S-adenosyl-L-homocysteine + H(+). In terms of biological role, specifically methylates the N4 position of cytidine in position 1402 (C1402) of 16S rRNA. The polypeptide is Ribosomal RNA small subunit methyltransferase H (Trichormus variabilis (strain ATCC 29413 / PCC 7937) (Anabaena variabilis)).